Here is a 522-residue protein sequence, read N- to C-terminus: Amine oxidase [flavin-containing] (522 aa).

Topologically, residues 1–492 (MTAQNTFDVI…FWERNLPSVG (492 aa)) are cytoplasmic. An S-8alpha-FAD cysteine modification is found at Cys399. A helical; Anchor for type IV membrane protein transmembrane segment spans residues 493–513 (GFINFLAASVLSVATAAGMLA). Over 514–522 (YQKGLLTRS) the chain is Mitochondrial intermembrane.

The protein belongs to the flavin monoamine oxidase family. FAD is required as a cofactor.

Its subcellular location is the mitochondrion outer membrane. It catalyses the reaction a secondary aliphatic amine + O2 + H2O = a primary amine + an aldehyde + H2O2. Catalyzes the oxidative deamination of biogenic and xenobiotic amines and has important functions in the metabolism of neuroactive and vasoactive amines in the central nervous system and peripheral tissues. Oxidizes both 5-hydroxytryptamine (5-HT) and beta-phenylethylamine (PEA). This is Amine oxidase [flavin-containing] (mao) from Oncorhynchus mykiss (Rainbow trout).